Reading from the N-terminus, the 367-residue chain is Glutamate 5-kinase (367 aa).

Lys-9 serves as a coordination point for ATP. Substrate contacts are provided by Ser-49, Asp-136, and Asn-148. Residues 168-169 and 210-216 contribute to the ATP site; these read TD and TGGMKSK. The 75-residue stretch at 276–350 folds into the PUA domain; that stretch reads SGQIEIDAGA…GMQSQHIQAR (75 aa).

The protein belongs to the glutamate 5-kinase family.

The protein resides in the cytoplasm. It catalyses the reaction L-glutamate + ATP = L-glutamyl 5-phosphate + ADP. It functions in the pathway amino-acid biosynthesis; L-proline biosynthesis; L-glutamate 5-semialdehyde from L-glutamate: step 1/2. Its function is as follows. Catalyzes the transfer of a phosphate group to glutamate to form L-glutamate 5-phosphate. The protein is Glutamate 5-kinase of Bacillus cereus (strain ZK / E33L).